A 298-amino-acid polypeptide reads, in one-letter code: Syntenin-1 (298 aa).

At Ser2 the chain carries N-acetylserine. The segment at Ser2 to Ser60 is interaction with PDCD6IP. 3 short sequence motifs (LYPX(n)L motif) span residues Leu3 to Leu7, Leu45 to Leu49, and Leu49 to Leu53. Residue Ser6 is modified to Phosphoserine. At Tyr46 the chain carries Phosphotyrosine. 2 PDZ domains span residues Glu114–Arg193 and Thr198–Phe273. A 1,2-diacyl-sn-glycero-3-phospho-(1D-myo-inositol-4,5-bisphosphate) is bound by residues Asn215 and Lys250 to Asp251.

Monomer and homodimer. Interacts with SDC1, SDC2, SDC3, SDC4, NRXN2, EPHA7, EPHB1, NF2 isoform 1, TGFA and IL5RA. Interacts with NFASC and PTPRJ. Interacts with SDCBP2. Interacts with PDCD6IP. Forms a complex with PDCD6IP and SDC2. Interacts (via C-terminus) with TGFBR1. Binds to FZD7; this interaction is increased by inositol trisphosphate (IP3). Interacts with SMO. In terms of processing, phosphorylated on tyrosine residues. In terms of tissue distribution, expressed in lung cancers, including adenocarcinoma, squamous cell carcinoma and small-cell carcinoma (at protein level). Widely expressed. Expressed in fetal kidney, liver, lung and brain. In adult highest expression in heart and placenta.

Its subcellular location is the cell junction. It localises to the focal adhesion. The protein resides in the adherens junction. It is found in the cell membrane. The protein localises to the endoplasmic reticulum membrane. Its subcellular location is the nucleus. It localises to the melanosome. The protein resides in the cytoplasm. It is found in the cytosol. The protein localises to the cytoskeleton. Its subcellular location is the secreted. It localises to the extracellular exosome. The protein resides in the membrane raft. Its function is as follows. Multifunctional adapter protein involved in diverse array of functions including trafficking of transmembrane proteins, neuro and immunomodulation, exosome biogenesis, and tumorigenesis. Positively regulates TGFB1-mediated SMAD2/3 activation and TGFB1-induced epithelial-to-mesenchymal transition (EMT) and cell migration in various cell types. May increase TGFB1 signaling by enhancing cell-surface expression of TGFR1 by preventing the interaction between TGFR1 and CAV1 and subsequent CAV1-dependent internalization and degradation of TGFR1. In concert with SDC1/4 and PDCD6IP, regulates exosome biogenesis. Regulates migration, growth, proliferation, and cell cycle progression in a variety of cancer types. In adherens junctions may function to couple syndecans to cytoskeletal proteins or signaling components. Seems to couple transcription factor SOX4 to the IL-5 receptor (IL5RA). May also play a role in vesicular trafficking. Seems to be required for the targeting of TGFA to the cell surface in the early secretory pathway. This is Syntenin-1 (SDCBP) from Homo sapiens (Human).